The following is a 433-amino-acid chain: MQVSVETTEGLGRRVNITVTADSIEKAVESELRNVAKKARIDGFRKGKVPMNIVAQRYGASVRQDVLGDLMQRNFVDAIIKEKLNPVGAPKYVPGEYKLGEDFAYAVEFEVYPEIELKGLDTIVVEKPQVDVNDADVDAMIETLRKQQASWSVKEGEVGAEDRATIDFTGSIDGEAFEGGKATDFVLAMGQGRMIPGFEDGILGHKAGEEFVIDVTFPEDYHAENLKGKAAKFDIVLKKVEERELPEMTAEFIKRFGVADGSLDGLKAEVRKNMTRELKNAVRNRIKAQVLDGLVLANEIDVPAALVDGEIDVLRRQAAQRFGGNEQQAMELPRELFEEQAKRRVIVGLLLGEVISKSELKADDARVNALIEEMASAYEDPQEVIEFYSKNKELMNNMRNMALEEQAVEALLSQAQVSEKATTFNELMNQPQA.

In terms of domain architecture, PPIase FKBP-type spans 161–246 (EDRATIDFTG…LKKVEERELP (86 aa)).

Belongs to the FKBP-type PPIase family. Tig subfamily.

It is found in the cytoplasm. The catalysed reaction is [protein]-peptidylproline (omega=180) = [protein]-peptidylproline (omega=0). Involved in protein export. Acts as a chaperone by maintaining the newly synthesized protein in an open conformation. Functions as a peptidyl-prolyl cis-trans isomerase. This is Trigger factor from Edwardsiella ictaluri (strain 93-146).